Here is a 146-residue protein sequence, read N- to C-terminus: Large ribosomal subunit protein mL49 (146 aa).

The transit peptide at 1–38 (MISSCVTRCFGRGKCLPGPATASIYQTIRCISTNSNKA) directs the protein to the mitochondrion.

It belongs to the mitochondrion-specific ribosomal protein mL49 family. Component of the mitochondrial large ribosomal subunit (mt-LSU). Mature yeast 74S mitochondrial ribosomes consist of a small (37S) and a large (54S) subunit. The 37S small subunit contains a 15S ribosomal RNA (15S mt-rRNA) and 34 different proteins. The 54S large subunit contains a 21S rRNA (21S mt-rRNA) and 46 different proteins.

It localises to the mitochondrion. Component of the mitochondrial ribosome (mitoribosome), a dedicated translation machinery responsible for the synthesis of mitochondrial genome-encoded proteins, including at least some of the essential transmembrane subunits of the mitochondrial respiratory chain. The mitoribosomes are attached to the mitochondrial inner membrane and translation products are cotranslationally integrated into the membrane. This Saccharomyces cerevisiae (strain ATCC 204508 / S288c) (Baker's yeast) protein is Large ribosomal subunit protein mL49 (IMG2).